Consider the following 95-residue polypeptide: Probable FAD-linked sulfhydryl oxidase OPG072 (95 aa).

Residues 1-8 (MNPKHWGR) are Intravirion-facing. Residues 1 to 95 (MNPKHWGRAV…AIDVTKVNPL (95 aa)) form the ERV/ALR sulfhydryl oxidase domain. A helical membrane pass occupies residues 9–25 (AVWTIIFIVLSQAGLDG). Residues 26 to 95 (NIEACKRKLY…AIDVTKVNPL (70 aa)) lie on the Virion surface side of the membrane. A disulfide bridge connects residues Cys43 and Cys46.

It belongs to the orthopoxvirus OPG072 family. In terms of assembly, interacts with OPG128/A2.5; this interaction involves formation of a transient disulfide-bonded intermediate, allowing disulfide bond transfer. Requires FAD as cofactor.

It is found in the virion membrane. It localises to the host cytoplasm. It carries out the reaction 2 R'C(R)SH + O2 = R'C(R)S-S(R)CR' + H2O2. Its function is as follows. FAD-dependent sulfhydryl oxidase that catalyzes disulfide bond formation. The complete pathway for formation of disulfide bonds in intracellular virion membrane proteins sequentially involves thiol-disulfide transfer between OPG072/E10, OPG128/A2.5 and OPG088/G4. The sequence is that of Probable FAD-linked sulfhydryl oxidase OPG072 (OPG072) from Bos taurus (Bovine).